We begin with the raw amino-acid sequence, 176 residues long: CDP-archaeol synthase (176 aa).

5 consecutive transmembrane segments (helical) span residues 12–32 (FIYW…SPVL), 60–80 (GFYV…IILC), 85–105 (ILIG…GSFI), 118–138 (PIID…FLGI), and 141–161 (FISY…LHII).

The protein belongs to the CDP-archaeol synthase family. Mg(2+) serves as cofactor.

It is found in the cell membrane. The enzyme catalyses 2,3-bis-O-(geranylgeranyl)-sn-glycerol 1-phosphate + CTP + H(+) = CDP-2,3-bis-O-(geranylgeranyl)-sn-glycerol + diphosphate. Its pathway is membrane lipid metabolism; glycerophospholipid metabolism. In terms of biological role, catalyzes the formation of CDP-2,3-bis-(O-geranylgeranyl)-sn-glycerol (CDP-archaeol) from 2,3-bis-(O-geranylgeranyl)-sn-glycerol 1-phosphate (DGGGP) and CTP. This reaction is the third ether-bond-formation step in the biosynthesis of archaeal membrane lipids. The chain is CDP-archaeol synthase from Staphylothermus marinus (strain ATCC 43588 / DSM 3639 / JCM 9404 / F1).